Reading from the N-terminus, the 505-residue chain is Glycerol kinase (505 aa).

Threonine 14 serves as a coordination point for ADP. Residues threonine 14, threonine 15, and serine 16 each coordinate ATP. Threonine 14 lines the sn-glycerol 3-phosphate pocket. Arginine 18 is a binding site for ADP. Sn-glycerol 3-phosphate contacts are provided by arginine 84, glutamate 85, tyrosine 136, and aspartate 246. 5 residues coordinate glycerol: arginine 84, glutamate 85, tyrosine 136, aspartate 246, and glutamine 247. Residues threonine 268 and glycine 311 each coordinate ADP. ATP-binding residues include threonine 268, glycine 311, glutamine 315, and glycine 412. ADP-binding residues include glycine 412 and asparagine 416.

Belongs to the FGGY kinase family.

The catalysed reaction is glycerol + ATP = sn-glycerol 3-phosphate + ADP + H(+). It functions in the pathway polyol metabolism; glycerol degradation via glycerol kinase pathway; sn-glycerol 3-phosphate from glycerol: step 1/1. With respect to regulation, inhibited by fructose 1,6-bisphosphate (FBP). Functionally, key enzyme in the regulation of glycerol uptake and metabolism. Catalyzes the phosphorylation of glycerol to yield sn-glycerol 3-phosphate. The chain is Glycerol kinase from Vibrio campbellii (strain ATCC BAA-1116).